Consider the following 345-residue polypeptide: 4-hydroxythreonine-4-phosphate dehydrogenase (345 aa).

The substrate site is built by H148 and T149. A divalent metal cation is bound by residues H182, H227, and H282. Positions 290, 299, and 308 each coordinate substrate.

This sequence belongs to the PdxA family. Homodimer. The cofactor is Zn(2+). Mg(2+) is required as a cofactor. Co(2+) serves as cofactor.

The protein localises to the cytoplasm. It carries out the reaction 4-(phosphooxy)-L-threonine + NAD(+) = 3-amino-2-oxopropyl phosphate + CO2 + NADH. It functions in the pathway cofactor biosynthesis; pyridoxine 5'-phosphate biosynthesis; pyridoxine 5'-phosphate from D-erythrose 4-phosphate: step 4/5. Its function is as follows. Catalyzes the NAD(P)-dependent oxidation of 4-(phosphooxy)-L-threonine (HTP) into 2-amino-3-oxo-4-(phosphooxy)butyric acid which spontaneously decarboxylates to form 3-amino-2-oxopropyl phosphate (AHAP). The chain is 4-hydroxythreonine-4-phosphate dehydrogenase from Bradyrhizobium diazoefficiens (strain JCM 10833 / BCRC 13528 / IAM 13628 / NBRC 14792 / USDA 110).